The chain runs to 502 residues: Maturase K (502 aa).

The protein belongs to the intron maturase 2 family. MatK subfamily.

The protein localises to the plastid. It localises to the chloroplast. Its function is as follows. Usually encoded in the trnK tRNA gene intron. Probably assists in splicing its own and other chloroplast group II introns. The sequence is that of Maturase K from Brassica oleracea (Wild cabbage).